Reading from the N-terminus, the 272-residue chain is Undecaprenyl-diphosphatase (272 aa).

The next 8 helical transmembrane spans lie at S6–S26, A45–W65, L89–H109, L115–A135, A156–A176, Y189–L209, A221–I241, and I251–F271.

This sequence belongs to the UppP family.

Its subcellular location is the cell inner membrane. It carries out the reaction di-trans,octa-cis-undecaprenyl diphosphate + H2O = di-trans,octa-cis-undecaprenyl phosphate + phosphate + H(+). In terms of biological role, catalyzes the dephosphorylation of undecaprenyl diphosphate (UPP). Confers resistance to bacitracin. The polypeptide is Undecaprenyl-diphosphatase (Cronobacter sakazakii (strain ATCC BAA-894) (Enterobacter sakazakii)).